We begin with the raw amino-acid sequence, 434 residues long: (3,5-dihydroxyphenyl)acetyl-CoA 1,2-dioxygenase (434 aa).

Residues Asp-184, Glu-190, 223–226, 234–239, Gly-293, 322–324, and Gln-413 contribute to the substrate site; these read HPRY, AGINLK, and IPG.

Belongs to the enoyl-CoA hydratase/isomerase family. In terms of assembly, homohexamer; dimer of trimers.

The enzyme catalyses (3,5-dihydroxyphenyl)acetyl-CoA + O2 = 2-(3,5-dihydroxyphenyl)-2-oxoacetate + CoA + H(+). Its function is as follows. Involved in the biosynthesis of the nonproteinogenic amino acid monomer (S)-3,5-dihydroxyphenylglycine (Dpg) responsible of the production of vancomycin and teicoplanin antibiotics. Catalyzes the unusual conversion 3,5-dihydroxyphenylacetyl-CoA (DPA-CoA) to 3,5-dihydroxyphenylglyoxylate. DpgC performed a net four-electron oxidation of the benzylic carbon of DPA-CoA and the hydrolysis of the thioester bond to generate free CoA. It can also use phenylacetyl-CoA (PA-CoA) as substrate. This Amycolatopsis orientalis (Nocardia orientalis) protein is (3,5-dihydroxyphenyl)acetyl-CoA 1,2-dioxygenase (dpgC).